The sequence spans 218 residues: Ras-related protein Rab-27B (218 aa).

Residue Thr2 is modified to N-acetylthreonine. 16 to 24 (GDSGVGKTT) contacts GTP. The Effector region motif lies at 38 to 46 (FITTVGIDF). GTP is bound by residues 74–78 (DTAGQ), 133–136 (NKAD), and 163–165 (SAA). Cys123 and Cys188 are disulfide-bonded. The tract at residues 194-218 (IPDTVNGGNSGNLDGEKPPEKKCIC) is disordered. A compositionally biased stretch (basic and acidic residues) spans 207-218 (DGEKPPEKKCIC). Residues Cys216 and Cys218 are each lipidated (S-geranylgeranyl cysteine). A Cysteine methyl ester modification is found at Cys218.

The protein belongs to the small GTPase superfamily. Rab family. As to quaternary structure, interacts with SYTL2, SYTL4, MYRIP and MLPH. Interacts with RPH3A and RPH3A. Interacts (GDP-bound form preferentially) with DENND10. As to expression, expressed primarily in testis.

Its subcellular location is the membrane. It is found in the late endosome. The catalysed reaction is GTP + H2O = GDP + phosphate + H(+). With respect to regulation, regulated by guanine nucleotide exchange factors (GEFs) which promote the exchange of bound GDP for free GTP, GTPase activating proteins (GAPs) which increase the GTP hydrolysis activity, and GDP dissociation inhibitors which inhibit the dissociation of the nucleotide from the GTPase. Activated by GEFs such as DENND10. Small GTPase which cycles between active GTP-bound and inactive GDP-bound states. In its active state, binds to a variety of effector proteins to regulate homeostasis of late endocytic pathway, including endosomal positioning, maturation and secretion. Plays a role in NTRK2/TRKB axonal anterograde transport by facilitating the association of NTRK2/TRKB with KLC1. May be involved in targeting uroplakins to urothelial apical membranes. The protein is Ras-related protein Rab-27B (RAB27B) of Homo sapiens (Human).